The chain runs to 582 residues: Actin-histidine N-methyltransferase (582 aa).

S-adenosyl-L-methionine contacts are provided by residues arginine 75, 104-106, arginine 254, 275-279, and 325-327; these read EGF, DMCNH, and NGF. Residues 94-314 form the SET domain; sequence DGFELVEFPE…SGEQIYIFYG (221 aa). The disordered stretch occupies residues 550-582; sequence DKDLLPNGTKSENDSFLAEDNQQETGNAKDFCS.

Belongs to the class V-like SAM-binding methyltransferase superfamily. SETD3 actin-histidine methyltransferase family.

It localises to the cytoplasm. It catalyses the reaction L-histidyl-[protein] + S-adenosyl-L-methionine = N(tele)-methyl-L-histidyl-[protein] + S-adenosyl-L-homocysteine + H(+). Functionally, protein-histidine N-methyltransferase that specifically mediates 3-methylhistidine (tele-methylhistidine) methylation of actin at 'His-73'. Does not have protein-lysine N-methyltransferase activity and probably only catalyzes histidine methylation of actin. This Xenopus tropicalis (Western clawed frog) protein is Actin-histidine N-methyltransferase.